A 254-amino-acid polypeptide reads, in one-letter code: tRNA (guanine-N(1)-)-methyltransferase (254 aa).

S-adenosyl-L-methionine contacts are provided by residues Gly-112 and 131-136 (IGDYIL).

This sequence belongs to the RNA methyltransferase TrmD family. Homodimer.

Its subcellular location is the cytoplasm. It catalyses the reaction guanosine(37) in tRNA + S-adenosyl-L-methionine = N(1)-methylguanosine(37) in tRNA + S-adenosyl-L-homocysteine + H(+). Functionally, specifically methylates guanosine-37 in various tRNAs. In Sulfurihydrogenibium sp. (strain YO3AOP1), this protein is tRNA (guanine-N(1)-)-methyltransferase.